The sequence spans 103 residues: NADH-quinone oxidoreductase subunit K 1 (103 aa).

3 helical membrane passes run 6-26 (LGHFLSVAAVLFTLGTLGIFL), 32-52 (IIILMSIELMLLAVNINLVAF), and 67-87 (LVLTVAAAEAAIGLAVLVVFF).

Belongs to the complex I subunit 4L family. In terms of assembly, NDH-1 is composed of 14 different subunits. Subunits NuoA, H, J, K, L, M, N constitute the membrane sector of the complex.

The protein localises to the cell inner membrane. It carries out the reaction a quinone + NADH + 5 H(+)(in) = a quinol + NAD(+) + 4 H(+)(out). Functionally, NDH-1 shuttles electrons from NADH, via FMN and iron-sulfur (Fe-S) centers, to quinones in the respiratory chain. The immediate electron acceptor for the enzyme in this species is believed to be ubiquinone. Couples the redox reaction to proton translocation (for every two electrons transferred, four hydrogen ions are translocated across the cytoplasmic membrane), and thus conserves the redox energy in a proton gradient. The polypeptide is NADH-quinone oxidoreductase subunit K 1 (Rhodopseudomonas palustris (strain ATCC BAA-98 / CGA009)).